The sequence spans 290 residues: MSYSPYIGRFAPSPSGSLHFGSLIAALGSFLRARSQGGQWLVRIEDIDPPREVPGAADDILRTLDAFGLHWDGKLMYQSQRTEAYQAKIDVLLASGEAYFCQCTRKQIQAIGGVYDGRCRQLGHQSGAIRIVNRARVNHFHDGLMGEVAVPDSFAAEDFIIKRSDGLYAYQLAVVMDDAKTGITEVVRGADLIEASCRQLSLFNQFGYQAPAWMHLPLACAEAGFKLSKQNHATPVDKANPLPALKAALAFLGQPIPDAHSVESLLAQAVADFSVASIPRRREILIDGGG.

L-glutamate-binding positions include 9–13 (RFAPS) and glutamate 45. Positions 12-22 (PSPSGSLHFGS) match the 'HIGH' region motif. 4 residues coordinate Zn(2+): cysteine 101, cysteine 103, tyrosine 115, and cysteine 119. Residues tyrosine 170 and arginine 188 each coordinate L-glutamate. The 'KMSKS' region motif lies at 226–230 (KLSKQ). Lysine 229 contacts ATP.

The protein belongs to the class-I aminoacyl-tRNA synthetase family. GluQ subfamily. Zn(2+) is required as a cofactor.

Functionally, catalyzes the tRNA-independent activation of glutamate in presence of ATP and the subsequent transfer of glutamate onto a tRNA(Asp). Glutamate is transferred on the 2-amino-5-(4,5-dihydroxy-2-cyclopenten-1-yl) moiety of the queuosine in the wobble position of the QUC anticodon. The sequence is that of Glutamyl-Q tRNA(Asp) synthetase from Shewanella amazonensis (strain ATCC BAA-1098 / SB2B).